The sequence spans 357 residues: D-alanine--D-alanine ligase A (357 aa).

The ATP-grasp domain maps to Lys-143–Glu-348. Ala-171–Glu-226 contacts ATP. Asp-302, Glu-315, and Asn-317 together coordinate Mg(2+).

It belongs to the D-alanine--D-alanine ligase family. It depends on Mg(2+) as a cofactor. Mn(2+) serves as cofactor.

Its subcellular location is the cytoplasm. The catalysed reaction is 2 D-alanine + ATP = D-alanyl-D-alanine + ADP + phosphate + H(+). The protein operates within cell wall biogenesis; peptidoglycan biosynthesis. Its function is as follows. Cell wall formation. The chain is D-alanine--D-alanine ligase A from Mesorhizobium japonicum (strain LMG 29417 / CECT 9101 / MAFF 303099) (Mesorhizobium loti (strain MAFF 303099)).